The sequence spans 369 residues: 4-hydroxy-3-methylbut-2-en-1-yl diphosphate synthase (flavodoxin) (369 aa).

Positions 270, 273, 305, and 312 each coordinate [4Fe-4S] cluster.

It belongs to the IspG family. [4Fe-4S] cluster serves as cofactor.

The catalysed reaction is (2E)-4-hydroxy-3-methylbut-2-enyl diphosphate + oxidized [flavodoxin] + H2O + 2 H(+) = 2-C-methyl-D-erythritol 2,4-cyclic diphosphate + reduced [flavodoxin]. It functions in the pathway isoprenoid biosynthesis; isopentenyl diphosphate biosynthesis via DXP pathway; isopentenyl diphosphate from 1-deoxy-D-xylulose 5-phosphate: step 5/6. Its function is as follows. Converts 2C-methyl-D-erythritol 2,4-cyclodiphosphate (ME-2,4cPP) into 1-hydroxy-2-methyl-2-(E)-butenyl 4-diphosphate. This chain is 4-hydroxy-3-methylbut-2-en-1-yl diphosphate synthase (flavodoxin), found in Pseudomonas fluorescens (strain ATCC BAA-477 / NRRL B-23932 / Pf-5).